The following is a 404-amino-acid chain: MLGSTGSIGTQTLEIVSELPDKFKVVALSAGRNIDLLTEQVSQHKPEVIAIEDENLLTDLKNNINNLGISNPPIVLGGREAINSVAAWDSADTVITGIVGCAGLIPTMSAIKAGKNIALANKETLIAAGSVVIPALKESKSRLLPADSEHSAIFQCIQGLPNYENADFSTGQIPNGLKAIHLTASGGAFRDWEVEDLKNVTVEDATSHPNWSMGRKITVDSATLMNKGLEVIEAHYLFGTSYENIEIAIHPQSIIHSMIEMEDSSVLAQLGWPDMKLPILYAMSWPERFKTNWKRFNLTEIGQLTFKKPDEVKYPCMGLAYSAGKCSGTMPAVLNAANEMAVDQFLKEKISFQEIPIFINKTCESHLNKINLNPKLEDILEVDNWARIFVQEEIKKGKKYINVG.

NADPH is bound by residues threonine 5, glycine 6, serine 7, isoleucine 8, glycine 31, arginine 32, asparagine 33, and asparagine 121. Lysine 122 contacts 1-deoxy-D-xylulose 5-phosphate. Glutamate 123 contributes to the NADPH binding site. Aspartate 147 contributes to the Mn(2+) binding site. 1-deoxy-D-xylulose 5-phosphate contacts are provided by serine 148, glutamate 149, serine 185, and histidine 208. Residue glutamate 149 coordinates Mn(2+). Residue glycine 214 coordinates NADPH. The 1-deoxy-D-xylulose 5-phosphate site is built by serine 221, asparagine 226, lysine 227, and glutamate 230. Mn(2+) is bound at residue glutamate 230.

The protein belongs to the DXR family. The cofactor is Mg(2+). Requires Mn(2+) as cofactor.

It carries out the reaction 2-C-methyl-D-erythritol 4-phosphate + NADP(+) = 1-deoxy-D-xylulose 5-phosphate + NADPH + H(+). It participates in isoprenoid biosynthesis; isopentenyl diphosphate biosynthesis via DXP pathway; isopentenyl diphosphate from 1-deoxy-D-xylulose 5-phosphate: step 1/6. In terms of biological role, catalyzes the NADPH-dependent rearrangement and reduction of 1-deoxy-D-xylulose-5-phosphate (DXP) to 2-C-methyl-D-erythritol 4-phosphate (MEP). The sequence is that of 1-deoxy-D-xylulose 5-phosphate reductoisomerase from Prochlorococcus marinus subsp. pastoris (strain CCMP1986 / NIES-2087 / MED4).